Consider the following 545-residue polypeptide: Coiled-coil domain-containing protein 60 (545 aa).

A coiled-coil region spans residues 72-99; the sequence is NILREENAMKKKQQLLQKLKEEELNKFQ. Residues 224 to 284 form a disordered region; that stretch reads PAIRTAMASR…DNESSSTKPE (61 aa). Over residues 238 to 259 the composition is skewed to low complexity; sequence RGSTLSLTRTSGGSSPQSSMMS.

The sequence is that of Coiled-coil domain-containing protein 60 (Ccdc60) from Mus musculus (Mouse).